Here is a 359-residue protein sequence, read N- to C-terminus: MGISFSNNNRRRDNNNRRHLHHYPPPPPYYYLDPPPPPPPFPPHYDYNYSNYHLSPPLPPQPQINSCSYGHYHYHPQPPQYFTTAQPNWWGPMMRPAYYCPPQPQTQPPKPYLEQQNAKKVRNDVNVHRDTVRLEVDDLVPGHHLVSFVFDALFDGSFTITFFAKEEPNCTIIPQFPEVYSPTRFHFQKGPGQKFLQPSGTGTDLSFFVLDDLSKPLEEDVYPLVISAETIISPNSISEQSSVHKQVTQAVLEKDNDGSFKVKVVKQILWIEGVRYELRELYGSTTQGAASGLDESGSGTECVICMTEAKDTAVLPCRHLCMCSDCAKELRLQSNKCPICRQPIEELLEIKMNSSDEQH.

A disordered region spans residues 1–35 (MGISFSNNNRRRDNNNRRHLHHYPPPPPYYYLDPP). Gly2 is lipidated: N-myristoyl glycine. Residues 23–35 (YPPPPPYYYLDPP) are compositionally biased toward pro residues. The DAR2 domain stretch occupies residues 148–267 (FVFDALFDGS…GSFKVKVVKQ (120 aa)). Residues 302–341 (CVICMTEAKDTAVLPCRHLCMCSDCAKELRLQSNKCPICR) form an RING-type zinc finger.

It belongs to the RING-type zinc finger family. LOG2 subfamily.

It catalyses the reaction S-ubiquitinyl-[E2 ubiquitin-conjugating enzyme]-L-cysteine + [acceptor protein]-L-lysine = [E2 ubiquitin-conjugating enzyme]-L-cysteine + N(6)-ubiquitinyl-[acceptor protein]-L-lysine.. Its pathway is protein modification; protein ubiquitination. Acts as an E3 ubiquitin-protein ligase, or as part of E3 complex, which accepts ubiquitin from specific E2 ubiquitin-conjugating enzymes and then transfers it to substrates (in vitro). The sequence is that of Probable E3 ubiquitin-protein ligase LUL4 (LUL4) from Arabidopsis thaliana (Mouse-ear cress).